The following is a 372-amino-acid chain: Alanine racemase (372 aa).

K36 (proton acceptor; specific for D-alanine) is an active-site residue. K36 is modified (N6-(pyridoxal phosphate)lysine). R134 serves as a coordination point for substrate. The active-site Proton acceptor; specific for L-alanine is Y266. M314 is a binding site for substrate.

It belongs to the alanine racemase family. The cofactor is pyridoxal 5'-phosphate.

The enzyme catalyses L-alanine = D-alanine. It functions in the pathway amino-acid biosynthesis; D-alanine biosynthesis; D-alanine from L-alanine: step 1/1. In terms of biological role, catalyzes the interconversion of L-alanine and D-alanine. May also act on other amino acids. The protein is Alanine racemase (alr) of Nitratidesulfovibrio vulgaris (strain DSM 19637 / Miyazaki F) (Desulfovibrio vulgaris).